The sequence spans 258 residues: Arylamine N-acetyltransferase 1 (258 aa).

The Acyl-thioester intermediate role is filled by Cys-59. 97 to 98 (IH) provides a ligand contact to substrate. Active-site residues include His-98 and Asp-113. Tyr-199 and Thr-205 together coordinate CoA.

Belongs to the arylamine N-acetyltransferase family.

The protein localises to the cytoplasm. The catalysed reaction is an arylamine + acetyl-CoA = an N-acetylarylamine + CoA. Functionally, participates in the detoxification of a plethora of hydrazine and arylamine drugs. The sequence is that of Arylamine N-acetyltransferase 1 (NAT1) from Felis catus (Cat).